A 594-amino-acid polypeptide reads, in one-letter code: Solute carrier family 22 member 14 (594 aa).

Residues 1–70 (MAGEENFKEE…EFGTFQQRLV (70 aa)) are Cytoplasmic-facing. The helical transmembrane segment at 71 to 91 (ALTFIPSIMSAFFMFADHFVF) threads the bilayer. Residues 92-184 (TAQKPYCNTS…LVCGMETKKD (93 aa)) lie on the Extracellular side of the membrane. Residues N99, N117, N125, and N150 are each glycosylated (N-linked (GlcNAc...) asparagine). A helical transmembrane segment spans residues 185 to 205 (TAQIMFMAGLPIGSLIFRLIT). The Cytoplasmic segment spans residues 206 to 210 (DKMGR). A helical membrane pass occupies residues 211 to 231 (YPAILLSLLGLIIFGFGTAFM). Residues 232-235 (NSFH) are Extracellular-facing. Residues 236–256 (LYLFFRFGISQSVVGYAISSI) form a helical membrane-spanning segment. Over 257-270 (SLATEWLVGEHRAH) the chain is Cytoplasmic. A helical membrane pass occupies residues 271 to 291 (AIILGHCFFAVGAVLLTGIAY). Topologically, residues 292-297 (SLPHWQ) are extracellular. Residues 298 to 318 (LLFLVGGILVIPFISYIWILP) form a helical membrane-spanning segment. Residues 319-379 (ESPRWLMMKG…DFCKNRQLCK (61 aa)) lie on the Cytoplasmic side of the membrane. A helical transmembrane segment spans residues 380–400 (VTLVMSCVWFTVSYTYFTLSL). At 401–408 (RMRELGVS) the chain is on the extracellular side. A helical transmembrane segment spans residues 409–431 (VHFRHVVPSIMEVPARLCCIFLL). Residues 432-437 (QQIGRK) lie on the Cytoplasmic side of the membrane. Residues 438–458 (WSLAVTLLQAIIWCLLLLFLP) form a helical membrane-spanning segment. Topologically, residues 459 to 488 (EGEDGLRLKWPRCPATELKSMTILVLMLRE) are extracellular. Residues 489-509 (FSLAATVTVFFLYTAELLPTV) traverse the membrane as a helical segment. Over 510–512 (LRA) the chain is Cytoplasmic. Residues 513-533 (TGLGLVSLASVAGAILSLTII) traverse the membrane as a helical segment. Topologically, residues 534-538 (SQTPS) are extracellular. Residues 539–559 (LLPIFLCCVLAIVAFSLSSLL) form a helical membrane-spanning segment. Over 560 to 594 (PETRDQPLSESLNHSSQIRNKVKDMKTKETSSDDV) the chain is Cytoplasmic. Residues 566–594 (PLSESLNHSSQIRNKVKDMKTKETSSDDV) are disordered. The segment covering 567–578 (LSESLNHSSQIR) has biased composition (polar residues). Positions 580-594 (KVKDMKTKETSSDDV) are enriched in basic and acidic residues.

The protein belongs to the major facilitator (TC 2.A.1) superfamily. Organic cation transporter (TC 2.A.1.19) family. Ubiquitous.

It is found in the mitochondrion inner membrane. Its subcellular location is the cell projection. The protein localises to the cilium. The protein resides in the flagellum membrane. The catalysed reaction is riboflavin(in) = riboflavin(out). Functionally, riboflavin transporter localized at the inner mitochondrial membrane of the spermatozoa midpiece, which is required for male fertility. SLC22A14-mediated riboflavin transport is essential for spermatozoa energy generation and motility: riboflavin is the precursor of FMN and FAD, which are coenzymes of many enzymes in the TCA cycle (the citric acid cycle) in mitochondria. Required for sperm motility and normal sperm flagellar structure. This is Solute carrier family 22 member 14 from Homo sapiens (Human).